A 189-amino-acid polypeptide reads, in one-letter code: Elongation factor P (189 aa).

Lys-34 carries the post-translational modification N6-(3,6-diaminohexanoyl)-5-hydroxylysine.

It belongs to the elongation factor P family. In terms of processing, may be beta-lysylated on the epsilon-amino group of Lys-34 by the combined action of EpmA and EpmB, and then hydroxylated on the C5 position of the same residue by EpmC (if this protein is present). Lysylation is critical for the stimulatory effect of EF-P on peptide-bond formation. The lysylation moiety may extend toward the peptidyltransferase center and stabilize the terminal 3-CCA end of the tRNA. Hydroxylation of the C5 position on Lys-34 may allow additional potential stabilizing hydrogen-bond interactions with the P-tRNA.

It is found in the cytoplasm. The protein operates within protein biosynthesis; polypeptide chain elongation. In terms of biological role, involved in peptide bond synthesis. Alleviates ribosome stalling that occurs when 3 or more consecutive Pro residues or the sequence PPG is present in a protein, possibly by augmenting the peptidyl transferase activity of the ribosome. Modification of Lys-34 is required for alleviation. In Legionella pneumophila (strain Paris), this protein is Elongation factor P.